The following is a 589-amino-acid chain: Transcription factor 4 (589 aa).

Disordered stretches follow at residues 1–124, 138–163, 184–239, 254–297, 384–492, and 556–589; these read MTSR…SSSK, DGHH…MLGN, PSHS…SQTG, HTNN…EGPL, SLLP…MANN, and KRRE…MGQM. Residues S8 and S13 each carry the phosphoserine modification. The segment covering 56-74 has biased composition (polar residues); it reads GTLSPTKPGSQYYPYSSNN. The segment at 136-157 is leucine-zipper; it reads MQDGHHSSDPWSSSSGMNQPGY. Residues 184–224 are compositionally biased toward polar residues; it reads PSHSSADINSSLPPMSTFHRSGTNHYSTSSCTPPANGTDSI. Residues 255–266 are compositionally biased toward low complexity; sequence TNNSFSSNPSTP. Residues 283–292 are compositionally biased toward polar residues; the sequence is NGGQASSSPN. S290 is modified (phosphoserine). The interval 380–403 is class A specific domain; sequence RGSHSLLPNQVPVPQLPVQSATSP. 2 stretches are compositionally biased toward low complexity: residues 385-398 and 421-430; these read LLPN…LPVQ and GQSVSSGSSE. At S433 the chain carries Phosphoserine. Composition is skewed to basic and acidic residues over residues 445–461 and 477–492; these read KSSE…DIKS and PEQK…MANN. Positions 486–539 constitute a bHLH domain; sequence ERRMANNARERLRVRDINEAFKELGRMVQLHLKSDKPQTKLLILHQAVAVILSL.

Efficient DNA binding requires dimerization with another bHLH protein. Forms homo- or heterooligomers with myogenin. Interacts with HIVEP2. Interacts with NEUROD2. Interacts with AGBL1.

It is found in the nucleus. Its function is as follows. Transcription factor that binds to the immunoglobulin enhancer Mu-E5/KE5-motif. Involved in the initiation of neuronal differentiation. Activates transcription by binding to the E box (5'-CANNTG-3'). Binds to the E-box present in the somatostatin receptor 2 initiator element (SSTR2-INR) to activate transcription. Interacts with the CCAAT displacement protein (CDP2) to bind the tyrosine hydroxylase enhancer. This is Transcription factor 4 (Tcf4) from Rattus norvegicus (Rat).